The chain runs to 405 residues: Argininosuccinate synthase (405 aa).

ATP contacts are provided by residues 10-18 (AYSGGLDTS) and A37. Positions 88 and 93 each coordinate L-citrulline. G118 lines the ATP pocket. T120, N124, and D125 together coordinate L-aspartate. Position 124 (N124) interacts with L-citrulline. L-citrulline-binding residues include R128, S179, S188, E264, and Y276.

It belongs to the argininosuccinate synthase family. Type 1 subfamily. Homotetramer.

It localises to the cytoplasm. The catalysed reaction is L-citrulline + L-aspartate + ATP = 2-(N(omega)-L-arginino)succinate + AMP + diphosphate + H(+). Its pathway is amino-acid biosynthesis; L-arginine biosynthesis; L-arginine from L-ornithine and carbamoyl phosphate: step 2/3. The polypeptide is Argininosuccinate synthase (Nitrosococcus oceani (strain ATCC 19707 / BCRC 17464 / JCM 30415 / NCIMB 11848 / C-107)).